The primary structure comprises 63 residues: Adipokinetic prohormone type 1 (63 aa).

The signal sequence occupies residues 1-22 (MVQRCALVVLLVVAVAAALCSA). Q23 bears the Pyrrolidone carboxylic acid mark. At T32 the chain carries Threonine amide.

It belongs to the AKH/HRTH/RPCH family.

It is found in the secreted. This hormone, released from cells in the corpora cardiaca, causes release of diglycerides from the fat body and stimulation of muscles to use these diglycerides as an energy source during energy-demanding processes. The polypeptide is Adipokinetic prohormone type 1 (Locusta migratoria (Migratory locust)).